A 348-amino-acid polypeptide reads, in one-letter code: MTQPLPGARAVSAENELDIRGLFRTLWAGKFWIIGIGLLFALIALAYTFFARQEWSATAITDRPTVNMLGGYYSQQQFLRNLDIKTDPASSDKPSVMDEAYKEFIMQLASWDTRRDFWLQTDYYKQRMVGNSKADAAMLDELINNIQFTPGDFTRAINDNVKLIAETAPDANNLLRQYVAFASQRAASHLNDELKGAWAARTVQMKAQVKRQEEVAKAIYSRRVNSIEQALKIAEQHNISRSATDVPADELPDSELFLLGRPMLQARLENLQAVGPAFDLDYFQNRAMLNTLNVGPTLDPRFQTYRYLRTPEEPVKRDSPRRAFLMIMWGIVGALIGAGVALTRRRTI.

A run of 2 helical transmembrane segments spans residues 31–51 (FWII…TFFA) and 323–343 (AFLM…VALT).

This sequence belongs to the WzzB/Cld/Rol family. In terms of assembly, probably part of a complex composed of WzxE, WzyE and WzzE.

The protein resides in the cell inner membrane. It functions in the pathway bacterial outer membrane biogenesis; enterobacterial common antigen biosynthesis. In terms of biological role, modulates the polysaccharide chain length of enterobacterial common antigen (ECA). The protein is ECA polysaccharide chain length modulation protein of Salmonella typhimurium (strain LT2 / SGSC1412 / ATCC 700720).